The sequence spans 204 residues: DNA-directed RNA polymerase subunit gamma (204 aa).

4 residues coordinate Zn(2+): C34, C36, C49, and C52.

This sequence belongs to the RNA polymerase beta' chain family. RpoC1 subfamily. As to quaternary structure, in cyanobacteria the RNAP catalytic core is composed of 2 alpha, 1 beta, 1 beta', 1 gamma and 1 omega subunit. When a sigma factor is associated with the core the holoenzyme is formed, which can initiate transcription. Zn(2+) serves as cofactor.

The enzyme catalyses RNA(n) + a ribonucleoside 5'-triphosphate = RNA(n+1) + diphosphate. Functionally, DNA-dependent RNA polymerase catalyzes the transcription of DNA into RNA using the four ribonucleoside triphosphates as substrates. This Prochlorococcus marinus (strain DV1) protein is DNA-directed RNA polymerase subunit gamma (rpoC1).